The chain runs to 177 residues: Transcriptional regulator MET31 (177 aa).

A C2H2-type zinc finger spans residues 95–117; the sequence is YSCAKCQLKFSRSSDLRRHEKVH.

Interacts with MET4 and MET28.

Its subcellular location is the cytoplasm. It localises to the nucleus. Functionally, auxiliary transcriptional regulator of sulfur amino acid metabolism. Involved in the transcriptional activation of MET28. The polypeptide is Transcriptional regulator MET31 (MET31) (Saccharomyces cerevisiae (strain ATCC 204508 / S288c) (Baker's yeast)).